A 284-amino-acid chain; its full sequence is Bifunctional protein FolD (284 aa).

Residues 166 to 168 (GAS) and I232 each bind NADP(+).

It belongs to the tetrahydrofolate dehydrogenase/cyclohydrolase family. Homodimer.

It carries out the reaction (6R)-5,10-methylene-5,6,7,8-tetrahydrofolate + NADP(+) = (6R)-5,10-methenyltetrahydrofolate + NADPH. It catalyses the reaction (6R)-5,10-methenyltetrahydrofolate + H2O = (6R)-10-formyltetrahydrofolate + H(+). It participates in one-carbon metabolism; tetrahydrofolate interconversion. Catalyzes the oxidation of 5,10-methylenetetrahydrofolate to 5,10-methenyltetrahydrofolate and then the hydrolysis of 5,10-methenyltetrahydrofolate to 10-formyltetrahydrofolate. This Shewanella sp. (strain ANA-3) protein is Bifunctional protein FolD.